A 306-amino-acid polypeptide reads, in one-letter code: Large ribosomal subunit protein uL2m (306 aa).

Residues 1–60 (MALRVVTRALGSLSLTPRIAAVPGPSLLPAAQVTNNVLLQLPSASMLLPSRPLLTSVALS) constitute a mitochondrion transit peptide.

The protein belongs to the universal ribosomal protein uL2 family. Component of the mitochondrial ribosome large subunit (39S) which comprises a 16S rRNA and about 50 distinct proteins.

It localises to the mitochondrion. This chain is Large ribosomal subunit protein uL2m (MRPL2), found in Bos taurus (Bovine).